Here is a 446-residue protein sequence, read N- to C-terminus: Mitochondrial ribonuclease P protein 1 homolog (446 aa).

A mitochondrion-targeting transit peptide spans 1–24 (MLKHFARWRLGSQLLKGCAAPVRQ). The segment at 41–67 (PQKKFVNPFSQPAPALSNDTISENKEE) is disordered. Residues Ser50 and Ser57 each carry the phosphoserine modification. The residue at position 60 (Thr60) is a Phosphothreonine. Ser62 carries the post-translational modification Phosphoserine. Residues 119-158 (LWQIEMKKEADQRKKAERAKEAERRVAEMRKEREENTHII) adopt a coiled-coil conformation. The region spanning 179–373 (QNNRLTRAMQ…KHVPRRKVVQ (195 aa)) is the SAM-dependent MTase TRM10-type domain.

Belongs to the class IV-like SAM-binding methyltransferase superfamily. TRM10 family. As to quaternary structure, component of mitochondrial ribonuclease P, a complex composed of rswl/MRPP1, scu/MRPP2 and mldr/MRPP3.

The protein resides in the mitochondrion. Functionally, mitochondrial tRNA N1-methyltransferase involved in mitochondrial tRNA maturation. Component of mitochondrial ribonuclease P, a complex composed of rswl/MRPP1, scu/MRPP2 and mldr/MRPP3., which cleaves tRNA molecules in their 5'-ends. Essential for the structural and functional integrity of mitochondria. Function is essential for pupal development. The polypeptide is Mitochondrial ribonuclease P protein 1 homolog (Drosophila melanogaster (Fruit fly)).